Reading from the N-terminus, the 275-residue chain is NADPH-dependent 7-cyano-7-deazaguanine reductase (275 aa).

81–83 (IES) lines the substrate pocket. Residue 83 to 84 (SK) participates in NADPH binding. The active-site Thioimide intermediate is cysteine 181. Aspartate 188 serves as the catalytic Proton donor. Residue 220–221 (HE) participates in substrate binding. Residue 249 to 250 (RG) participates in NADPH binding.

Belongs to the GTP cyclohydrolase I family. QueF type 2 subfamily. In terms of assembly, homodimer.

Its subcellular location is the cytoplasm. The enzyme catalyses 7-aminomethyl-7-carbaguanine + 2 NADP(+) = 7-cyano-7-deazaguanine + 2 NADPH + 3 H(+). Its pathway is tRNA modification; tRNA-queuosine biosynthesis. In terms of biological role, catalyzes the NADPH-dependent reduction of 7-cyano-7-deazaguanine (preQ0) to 7-aminomethyl-7-deazaguanine (preQ1). This is NADPH-dependent 7-cyano-7-deazaguanine reductase from Xylella fastidiosa (strain 9a5c).